The primary structure comprises 427 residues: UPF0415 protein C7orf25 homolog (427 aa).

Acidic residues predominate over residues 200–234 (GGEEEDEEDQEGDHEDLVEEEEDGEDDNDDDSDDT). The interval 200-236 (GGEEEDEEDQEGDHEDLVEEEEDGEDDNDDDSDDTDL) is disordered.

Belongs to the UPF0415 family.

This Danio rerio (Zebrafish) protein is UPF0415 protein C7orf25 homolog.